A 127-amino-acid polypeptide reads, in one-letter code: Major sperm protein 63 (127 aa).

N-acetylalanine is present on alanine 2. Residues 9–126 enclose the MSP domain; the sequence is DIQTQPGTKI…RRKNLPIEYN (118 aa).

In terms of tissue distribution, sperm.

It is found in the cell projection. It localises to the pseudopodium. Its subcellular location is the cytoplasm. The protein resides in the cytoskeleton. In terms of biological role, central component in molecular interactions underlying sperm crawling. Forms an extensive filament system that extends from sperm villipoda, along the leading edge of the pseudopod. The polypeptide is Major sperm protein 63 (msp-63) (Caenorhabditis elegans).